A 60-amino-acid chain; its full sequence is Translational regulator CsrA (60 aa).

The protein belongs to the CsrA/RsmA family. As to quaternary structure, homodimer; the beta-strands of each monomer intercalate to form a hydrophobic core, while the alpha-helices form wings that extend away from the core.

It is found in the cytoplasm. In terms of biological role, a key translational regulator that binds mRNA to regulate translation initiation and/or mRNA stability. Mediates global changes in gene expression, shifting from rapid growth to stress survival by linking envelope stress, the stringent response and the catabolite repression systems. Usually binds in the 5'-UTR; binding at or near the Shine-Dalgarno sequence prevents ribosome-binding, repressing translation, binding elsewhere in the 5'-UTR can activate translation and/or stabilize the mRNA. Its function is antagonized by small RNA(s). In Histophilus somni (strain 2336) (Haemophilus somnus), this protein is Translational regulator CsrA.